The following is a 1013-amino-acid chain: Zinc finger and BTB domain-containing protein 4 (1013 aa).

The BTB domain occupies 30-152; that stretch reads CDVTLIAGDT…IYSARLALPG (123 aa). K40 is covalently cross-linked (Glycyl lysine isopeptide (Lys-Gly) (interchain with G-Cter in SUMO2)). Residues 67-110 show a composition bias toward low complexity; sequence LPPATGGAAPNPATTTAASSSSSSSSSSSSSSSSASSSSSSSSS. Disordered stretches follow at residues 67–124 and 183–221; these read LPPA…SPPR and DAWVPPTPAPMATSQPEEDSFGPGPRPAGEWEGDRAEAQ. The segment covering 111 to 121 has biased composition (pro residues); that stretch reads SPPPASPPASS. An interaction with CBFA2T3 region spans residues 186-348; that stretch reads VPPTPAPMAT…CRYCEKVFAL (163 aa). The C2H2-type 1; atypical zinc-finger motif lies at 234–256; that stretch reads LPCPQCGKSFIHPKRLQTHEAQC. The interval 257–281 is disordered; sequence RRGASTRGSTGLGAGGAGPGGPAGV. A compositionally biased stretch (gly residues) spans 266 to 279; it reads TGLGAGGAGPGGPA. 3 C2H2-type zinc fingers span residues 309–331, 337–359, and 365–388; these read YVCAACERSYVTLSSLKRHSNVH, YPCRYCEKVFALAEYRTKHEVWH, and YQCIFCWETFVTYYNLKTHQRAFH. The residue at position 391 (S391) is a Phosphoserine. 4 disordered regions span residues 428-765, 783-852, 883-904, and 972-1013; these read KTYS…STRF, HGQR…DPII, GREPGGGRGKSGSEGPVGAGEG, and VNPQ…GDVG. Residues 453–470 are compositionally biased toward pro residues; sequence ASPPPGPPPAPEPGPPPS. 2 stretches are compositionally biased toward low complexity: residues 496-506 and 531-554; these read TASTGGSQAAS and ATPTSPATAVSPATAAGPAMATTT. K573 participates in a covalent cross-link: Glycyl lysine isopeptide (Lys-Gly) (interchain with G-Cter in SUMO2). Gly residues predominate over residues 576–590; it reads GGIGGGGGPPTGAGR. Residues 608–625 are compositionally biased toward basic and acidic residues; the sequence is IGEEAIVKRRISETDLRP. Residue K615 forms a Glycyl lysine isopeptide (Lys-Gly) (interchain with G-Cter in SUMO2) linkage. Residues 627–663 are a coiled coil; that stretch reads ELSGEEMEESEEDEEEEDEEEEEEDEEESKAGGEDQL. Residues 629–654 are compositionally biased toward acidic residues; the sequence is SGEEMEESEEDEEEEDEEEEEEDEEE. Positions 678–689 are enriched in gly residues; the sequence is AAGGASVGGSGL. 2 consecutive C2H2-type zinc fingers follow at residues 726-748 and 765-787; these read HRCGDCAQTFTTLRKLRKHQEAH and FTCPHCAKVCKTAAALSRHGQRH. A phosphothreonine; by HIPK2 mark is found at T795 and T797. The segment covering 836–846 has biased composition (low complexity); sequence TAAEEASETAS. The span at 883 to 902 shows a compositional bias: gly residues; it reads GREPGGGRGKSGSEGPVGAG. Residues 976–995 show a composition bias toward pro residues; the sequence is AAPPAPPTPPPPTLPPPIPP. T983 is modified (phosphothreonine; by HIPK2). The segment covering 997 to 1013 has biased composition (basic and acidic residues); that stretch reads GEGERAGVERTQKGDVG.

Interacts with HIPK2. Interacts with CBFA2T3. Interacts with ZBTB38. Post-translationally, phosphorylated by HIPK2. This phosphorylation reduces stability and triggers ZBTB4 protein degradation in response to DNA damage.

Its subcellular location is the nucleus. The protein resides in the chromosome. In terms of biological role, transcriptional repressor with bimodal DNA-binding specificity. Represses transcription in a methyl-CpG-dependent manner. Binds with a higher affinity to methylated CpG dinucleotides in the consensus sequence 5'-CGCG-3' but can also bind to the non-methylated consensus sequence 5'-CTGCNA-3' also known as the consensus kaiso binding site (KBS). Can also bind specifically to a single methyl-CpG pair and can bind hemimethylated DNA but with a lower affinity compared to methylated DNA. Plays a role in postnatal myogenesis, may be involved in the regulation of satellite cells self-renewal. The chain is Zinc finger and BTB domain-containing protein 4 (ZBTB4) from Homo sapiens (Human).